A 364-amino-acid chain; its full sequence is Cell division protein FtsZ 1 (364 aa).

Residues 47–48 (GA), 97–99 (AGG), 134–136 (GTG), E165, R169, and D212 each bind GTP.

It belongs to the FtsZ family. Homodimer. Polymerizes to form a dynamic ring structure in a strictly GTP-dependent manner. Interacts directly with several other division proteins.

It is found in the cytoplasm. Its function is as follows. Essential cell division protein that forms a contractile ring structure (Z ring) at the future cell division site. The regulation of the ring assembly controls the timing and the location of cell division. One of the functions of the FtsZ ring is to recruit other cell division proteins to the septum to produce a new cell wall between the dividing cells. Binds GTP and shows GTPase activity. The protein is Cell division protein FtsZ 1 of Methanocaldococcus jannaschii (strain ATCC 43067 / DSM 2661 / JAL-1 / JCM 10045 / NBRC 100440) (Methanococcus jannaschii).